A 190-amino-acid chain; its full sequence is MAEQNIDDILSNSEKDTKKWYVIHTASGAENRIKRIMLERISKQKMSDFFDDILVPVFGVSEVKRSKNVKVEKKLMPSYILIKMNMTDKSWHLVKNIPGVTGFLGSKTTPKALTESEIQNIRLETEAKEAKDAKLYEVGEIVTVTEGPFETFTGTVEEVDQEKARLKVSVSIFGKATPIELSFTQVKKND.

Residues 138–166 (VGEIVTVTEGPFETFTGTVEEVDQEKARL) form the KOW domain.

This sequence belongs to the NusG family.

Participates in transcription elongation, termination and antitermination. The sequence is that of Transcription termination/antitermination protein NusG from Rickettsia bellii (strain RML369-C).